A 457-amino-acid polypeptide reads, in one-letter code: tRNA-2-methylthio-N(6)-dimethylallyladenosine synthase (457 aa).

The MTTase N-terminal domain maps to 2–119 (KKVFIKTFGC…LPELIDARRR (118 aa)). Cysteine 11, cysteine 48, cysteine 82, cysteine 156, cysteine 160, and cysteine 163 together coordinate [4Fe-4S] cluster. Positions 142–375 (RVEGPSAFVS…QATIDANMAR (234 aa)) constitute a Radical SAM core domain. A TRAM domain is found at 378–448 (EGMVGSVQRI…PHSLRGDVVE (71 aa)).

The protein belongs to the methylthiotransferase family. MiaB subfamily. In terms of assembly, monomer. It depends on [4Fe-4S] cluster as a cofactor.

Its subcellular location is the cytoplasm. The enzyme catalyses N(6)-dimethylallyladenosine(37) in tRNA + (sulfur carrier)-SH + AH2 + 2 S-adenosyl-L-methionine = 2-methylsulfanyl-N(6)-dimethylallyladenosine(37) in tRNA + (sulfur carrier)-H + 5'-deoxyadenosine + L-methionine + A + S-adenosyl-L-homocysteine + 2 H(+). In terms of biological role, catalyzes the methylthiolation of N6-(dimethylallyl)adenosine (i(6)A), leading to the formation of 2-methylthio-N6-(dimethylallyl)adenosine (ms(2)i(6)A) at position 37 in tRNAs that read codons beginning with uridine. This chain is tRNA-2-methylthio-N(6)-dimethylallyladenosine synthase, found in Ralstonia nicotianae (strain ATCC BAA-1114 / GMI1000) (Ralstonia solanacearum).